A 265-amino-acid polypeptide reads, in one-letter code: Indole-3-glycerol phosphate synthase (265 aa).

The protein belongs to the TrpC family.

It catalyses the reaction 1-(2-carboxyphenylamino)-1-deoxy-D-ribulose 5-phosphate + H(+) = (1S,2R)-1-C-(indol-3-yl)glycerol 3-phosphate + CO2 + H2O. Its pathway is amino-acid biosynthesis; L-tryptophan biosynthesis; L-tryptophan from chorismate: step 4/5. This Xanthomonas oryzae pv. oryzae (strain PXO99A) protein is Indole-3-glycerol phosphate synthase.